A 540-amino-acid chain; its full sequence is tRNA-2-methylthio-N(6)-dimethylallyladenosine synthase (540 aa).

Residues 4–120 (RSYEVRTFGC…LPVLLERARH (117 aa)) enclose the MTTase N-terminal domain. Residues Cys13, Cys49, Cys83, Cys157, Cys161, and Cys164 each coordinate [4Fe-4S] cluster. One can recognise a Radical SAM core domain in the interval 143 to 374 (RASHHSAWVS…ALQDEISWAE (232 aa)). The TRAM domain occupies 376–468 (RALVGRRVEV…PHHLTADGPL (93 aa)). The tract at residues 480–540 (WALGRDGDGG…ADACCTPVRR (61 aa)) is disordered. Composition is skewed to low complexity over residues 492 to 502 (AAAQQPADGRP) and 520 to 533 (GPAS…GADA).

It belongs to the methylthiotransferase family. MiaB subfamily. Monomer. [4Fe-4S] cluster serves as cofactor.

The protein resides in the cytoplasm. The catalysed reaction is N(6)-dimethylallyladenosine(37) in tRNA + (sulfur carrier)-SH + AH2 + 2 S-adenosyl-L-methionine = 2-methylsulfanyl-N(6)-dimethylallyladenosine(37) in tRNA + (sulfur carrier)-H + 5'-deoxyadenosine + L-methionine + A + S-adenosyl-L-homocysteine + 2 H(+). Its function is as follows. Catalyzes the methylthiolation of N6-(dimethylallyl)adenosine (i(6)A), leading to the formation of 2-methylthio-N6-(dimethylallyl)adenosine (ms(2)i(6)A) at position 37 in tRNAs that read codons beginning with uridine. This chain is tRNA-2-methylthio-N(6)-dimethylallyladenosine synthase, found in Frankia casuarinae (strain DSM 45818 / CECT 9043 / HFP020203 / CcI3).